The following is a 393-amino-acid chain: Large ribosomal subunit protein uL2m (393 aa).

The N-terminal 43 residues, 1–43 (MLVLGSLRSALSCSSTASLISKRNPCYPYGILCRTLSQSVKLW), are a transit peptide targeting the mitochondrion. The segment at 337-393 (AMNKCDHPHGGGRGKSKSNKLSMSPWGQLAKGYKTRRGKNQNRMKVKDRPRGKDARL) is disordered. The segment covering 369–380 (YKTRRGKNQNRM) has biased composition (basic residues). Over residues 381–393 (KVKDRPRGKDARL) the composition is skewed to basic and acidic residues.

Belongs to the universal ribosomal protein uL2 family. As to quaternary structure, component of the mitochondrial large ribosomal subunit (mt-LSU). Mature yeast 74S mitochondrial ribosomes consist of a small (37S) and a large (54S) subunit. The 37S small subunit contains a 15S ribosomal RNA (15S mt-rRNA) and 34 different proteins. The 54S large subunit contains a 21S rRNA (21S mt-rRNA) and 46 different proteins. uL2m has a Na/K ligand binding site.

Its subcellular location is the mitochondrion. In terms of biological role, component of the mitochondrial ribosome (mitoribosome), a dedicated translation machinery responsible for the synthesis of mitochondrial genome-encoded proteins, including at least some of the essential transmembrane subunits of the mitochondrial respiratory chain. The mitoribosomes are attached to the mitochondrial inner membrane and translation products are cotranslationally integrated into the membrane. The sequence is that of Large ribosomal subunit protein uL2m (RML2) from Saccharomyces cerevisiae (strain ATCC 204508 / S288c) (Baker's yeast).